The primary structure comprises 336 residues: Pentalenene synthase (336 aa).

The Mg(2+) site is built by aspartate 80, aspartate 84, asparagine 219, serine 223, and glutamate 227. Residues 80–84 carry the DDXXD motif motif; sequence DDLFD.

Belongs to the terpene synthase family. Monomer. Mg(2+) is required as a cofactor.

The enzyme catalyses (2E,6E)-farnesyl diphosphate = pentalenene + diphosphate. Its pathway is antibiotic biosynthesis; neopentalenolactone biosynthesis. In terms of biological role, catalyzes the cyclization of farnesyl diphosphate (FPP) to the tricyclic sesquiterpene pentalenene in the biosynthesis of neopentalenolactone antibiotic. The protein is Pentalenene synthase (ptlA) of Streptomyces avermitilis (strain ATCC 31267 / DSM 46492 / JCM 5070 / NBRC 14893 / NCIMB 12804 / NRRL 8165 / MA-4680).